Consider the following 374-residue polypeptide: Chaperone protein DnaJ (374 aa).

The region spanning asparagine 5 to glycine 69 is the J domain. The CR-type zinc finger occupies glycine 137 to glutamine 215. 8 residues coordinate Zn(2+): cysteine 150, cysteine 153, cysteine 167, cysteine 170, cysteine 189, cysteine 192, cysteine 203, and cysteine 206. CXXCXGXG motif repeat units lie at residues cysteine 150–glycine 157, cysteine 167–glycine 174, cysteine 189–glycine 196, and cysteine 203–glycine 210.

The protein belongs to the DnaJ family. In terms of assembly, homodimer. The cofactor is Zn(2+).

The protein localises to the cytoplasm. In terms of biological role, participates actively in the response to hyperosmotic and heat shock by preventing the aggregation of stress-denatured proteins and by disaggregating proteins, also in an autonomous, DnaK-independent fashion. Unfolded proteins bind initially to DnaJ; upon interaction with the DnaJ-bound protein, DnaK hydrolyzes its bound ATP, resulting in the formation of a stable complex. GrpE releases ADP from DnaK; ATP binding to DnaK triggers the release of the substrate protein, thus completing the reaction cycle. Several rounds of ATP-dependent interactions between DnaJ, DnaK and GrpE are required for fully efficient folding. Also involved, together with DnaK and GrpE, in the DNA replication of plasmids through activation of initiation proteins. This Rickettsia massiliae (strain Mtu5) protein is Chaperone protein DnaJ.